A 1155-amino-acid chain; its full sequence is Cilia- and flagella-associated protein 251 (1155 aa).

Composition is skewed to basic and acidic residues over residues 1–19 and 31–59; these read MSDA…GETE and KEVE…KTGE. Disordered stretches follow at residues 1 to 144 and 167 to 225; these read MSDA…KLSL and LDQI…DIQS. The span at 60–69 shows a compositional bias: acidic residues; sequence EEGEEEEEKE. Basic and acidic residues predominate over residues 70-95; sequence EEGKKDKKIVMEETEEKAGESQEKEA. Residues 99–111 show a composition bias toward low complexity; the sequence is QEETTVEPQEVTE. Polar residues-rich tracts occupy residues 118-128 and 172-182; these read TQITDSQSVTS and PEEQQISSPER. Basic and acidic residues predominate over residues 201-220; that stretch reads GQERRDLEPENREEGQERTV. WD repeat units follow at residues 341–383, 391–431, 442–481, 499–534, 537–597, 601–641, 647–684, 694–730, 737–780, 791–831, 837–883, 889–927, 965–1005, and 1025–1065; these read PVHT…IWKW, ACTL…AWYE, LLTE…VWDI, PCKL…FYDH, SIVN…VYHL, GTKL…VWNY, LFSR…ILDA, PFKY…MLVV, WEYL…GYDL, LDIH…LFNA, RKTL…ILPV, KTSA…QWKI, YFYY…FYPS, and GKLI…GYTN.

The protein localises to the cytoplasm. Its subcellular location is the cytoskeleton. It localises to the cilium axoneme. The protein resides in the cell projection. It is found in the cilium. The protein localises to the flagellum. In terms of biological role, involved in spermatozoa motility. May also regulate cilium motility through its role in the assembly of the axonemal radial spokes. The protein is Cilia- and flagella-associated protein 251 of Pongo abelii (Sumatran orangutan).